The following is a 205-amino-acid chain: Proteasome subunit beta type-3 (205 aa).

This sequence belongs to the peptidase T1B family. In terms of assembly, the 26S proteasome consists of a 20S proteasome core and two 19S regulatory subunits. The 20S proteasome core is composed of 28 subunits that are arranged in four stacked rings, resulting in a barrel-shaped structure. The two end rings are each formed by seven alpha subunits, and the two central rings are each formed by seven beta subunits. The catalytic chamber with the active sites is on the inside of the barrel.

The protein resides in the cytoplasm. It localises to the nucleus. In terms of biological role, non-catalytic component of the proteasome, a multicatalytic proteinase complex which is characterized by its ability to cleave peptides with Arg, Phe, Tyr, Leu, and Glu adjacent to the leaving group at neutral or slightly basic pH. The proteasome has an ATP-dependent proteolytic activity. The chain is Proteasome subunit beta type-3 (psmb3) from Oncorhynchus mykiss (Rainbow trout).